Reading from the N-terminus, the 365-residue chain is Heme A synthase (365 aa).

Helical transmembrane passes span 23-43 (LLRIWLRVVLFTLFCLVLVGG), 109-129 (LLARTIGLVFALPLAFFWLTG), 137-157 (LPLVGLLALGGFQGFVGWWMV), 172-192 (LATHLTIACLIFAGCMWILRG), and 208-228 (GFAALLTVLCLFQIYLGALVA). A heme-binding site is contributed by histidine 272. Helical transmembrane passes span 274–294 (LGAYTLFAATLWHMVSMARAL), 303–323 (AVLFFVLISVQAGLGITTLLM), and 327–347 (IHVALAHQGMALILLGFSVAH). Residue histidine 333 coordinates heme.

This sequence belongs to the COX15/CtaA family. Type 2 subfamily. As to quaternary structure, interacts with CtaB. Requires heme b as cofactor.

It is found in the cell membrane. It catalyses the reaction Fe(II)-heme o + 2 A + H2O = Fe(II)-heme a + 2 AH2. It participates in porphyrin-containing compound metabolism; heme A biosynthesis; heme A from heme O: step 1/1. In terms of biological role, catalyzes the conversion of heme O to heme A by two successive hydroxylations of the methyl group at C8. The first hydroxylation forms heme I, the second hydroxylation results in an unstable dihydroxymethyl group, which spontaneously dehydrates, resulting in the formyl group of heme A. The sequence is that of Heme A synthase from Agrobacterium fabrum (strain C58 / ATCC 33970) (Agrobacterium tumefaciens (strain C58)).